The following is a 509-amino-acid chain: MRLEDLARVVDPIAVRGDLTREINGLYCDSRQVRSGGLFFALKGVASDGHDFIASARERGAVAVVLEDETRAPCGMEWIRVGDARLAMSRMAALFYGQPTDGVPVVGITGTNGKTTTTYLVEAIMSRAGIPAAVLGTISYRFGSKLVPAPHTTPESVELQATIRDLVDEGAKAVVMEVSSHALEQRRVDSCRFDVAVFTNLTRDHLDYHRDMESYFGSKARLFTELVAPDGVKPRRAAAINRDDSYGARLVETAVAPVISYGLAADAAVRAENVVFSVDGIAGTLVTPFGTAPFHSHLLGRFNLYNILAAVAAGVGLGLSLDVILGGIEGDVRVPGRLERVHNERGVTVLVDYAHTGDALENVLKTVSELATGRIITVFGCGGDRDRGKRPVMAEISGRYSHLTIVTSDNPRTEEPAAIIKEVLTGIIPMGLREYDARELNRGFVEKGFTSLVSRHDAIRLAATVAVAGDIVLLAGKGHEDYQIIGTEKFHFDDREEAIAAFRSSDSGE.

A UDP-N-acetyl-alpha-D-muramoyl-L-alanyl-D-glutamate-binding site is contributed by serine 30. Glycine 110–threonine 116 contributes to the ATP binding site. UDP-N-acetyl-alpha-D-muramoyl-L-alanyl-D-glutamate is bound by residues threonine 152–threonine 153, serine 179, glutamine 185, and arginine 187. Position 219 is an N6-carboxylysine (lysine 219). Meso-2,6-diaminopimelate is bound by residues arginine 385, aspartate 409–arginine 412, glycine 476, and glutamate 480. Residues aspartate 409–arginine 412 carry the Meso-diaminopimelate recognition motif motif.

This sequence belongs to the MurCDEF family. MurE subfamily. Mg(2+) is required as a cofactor. Post-translationally, carboxylation is probably crucial for Mg(2+) binding and, consequently, for the gamma-phosphate positioning of ATP.

The protein localises to the cytoplasm. It carries out the reaction UDP-N-acetyl-alpha-D-muramoyl-L-alanyl-D-glutamate + meso-2,6-diaminopimelate + ATP = UDP-N-acetyl-alpha-D-muramoyl-L-alanyl-gamma-D-glutamyl-meso-2,6-diaminopimelate + ADP + phosphate + H(+). It functions in the pathway cell wall biogenesis; peptidoglycan biosynthesis. Catalyzes the addition of meso-diaminopimelic acid to the nucleotide precursor UDP-N-acetylmuramoyl-L-alanyl-D-glutamate (UMAG) in the biosynthesis of bacterial cell-wall peptidoglycan. The chain is UDP-N-acetylmuramoyl-L-alanyl-D-glutamate--2,6-diaminopimelate ligase from Geobacter sulfurreducens (strain ATCC 51573 / DSM 12127 / PCA).